Reading from the N-terminus, the 910-residue chain is MGVRGLQGFVGSTCPHICTVVNFKELAEHHRSKYPGCTPTIVVDAMCCLRYWYTPESWICGGQWREYFSALRDFVKTFTAAGIKLIFFFDGMVEQDKRDEWVKRRLKNNREISRIFHYIKSHKEQPGRNMFFIPSGLAVFTRFALKTLGQETLCSLQEADYEVASYGLQHNCLGILGEDTDYLIYDTCPYFSISELCLESLDTVMLCREKLCESLGLCVADLPLLACLLGNDIIPEGMFESFRYKCLSSYTSVKENFDKKGNIILAVSDHISKVLYLYQGEKKLEEILPLGPNKALFYKGMASYLLPGQKSPWFFQKPKGVITLDKQVISTSSDAESREEVPMCSDAESRQEVPMCTGPESRREVPVYTDSEPRQEVPMCSDPEPRQEVPTCTGPESRREVPMCSDPEPRQEVPMCTGPEARQEVPMYTDSEPRQEVPMYTDSEPRQEVPMYTGSEPRQEVPMYTGPESRQEVPMYTGPESRQEVLIRTDPESRQEIMCTGHESKQEVPICTDPISKQEDSMCTHAEINQKLPVATDFEFKLEALMCTNPEIKQEDPTNVGPEVKQQVTMVSDTEILKVARTHHVQAESYLVYNIMSSGEIECSNTLEDELDQALPSQAFIYRPIRQRVYSLLLEDCQDVTSTCLAVKEWFVYPGNPLRHPDLVRPLQMTIPGGTPSLKILWLNQEPEIQVRRLDTLLACFNLSSSREELQAVESPFQALCCLLIYLFVQVDTLCLEDLHAFIAQALCLQGKSTSQLVNLQPDYINPRAVQLGSLLVRGLTTLVLVNSACGFPWKTSDFMPWNVFDGKLFHQKYLQSEKGYAVEVLLEQNRSRLTKFHNLKAVVCKACMKENRRITGRAHWGSHHAGRWGRQGSSYHRTGSGYSRSSQGQPWRDQGPGSRQYEHDQWRRY.

Disordered regions lie at residues 333–416 (SDAE…VPMC), 443–483 (SEPR…ESRQ), and 863–910 (SHHA…WRRY). Composition is skewed to basic and acidic residues over residues 335–351 (AESREEVPMCSDAESRQ), 360–375 (ESRREVPVYTDSEPRQ), and 396–411 (ESRREVPMCSDPEPRQ). A compositionally biased stretch (polar residues) spans 872–890 (QGSSYHRTGSGYSRSSQGQ). The residue at position 885 (R885) is an Omega-N-methylarginine. Basic and acidic residues predominate over residues 901-910 (QYEHDQWRRY).

The protein belongs to the constitutive coactivator of PPAR-gamma family. In terms of assembly, interacts with ESR1 and RXRA. Interacts with PPARG; in a ligand-independent manner. Widely expressed.

The protein localises to the nucleus. Functionally, functions as a transactivator of PPARG and ESR1. Functions in adipogenesis through PPARG activation. In Homo sapiens (Human), this protein is Constitutive coactivator of peroxisome proliferator-activated receptor gamma (FAM120B).